The sequence spans 731 residues: Ubiquitin carboxyl-terminal hydrolase 17 (731 aa).

Positions 57, 60, 68, 71, 77, 81, 90, and 94 each coordinate Zn(2+). The segment at 57 to 94 (CAVCLYPTTTRCSQCKSVRYCSSKCQILHWRRGHKEEC) adopts an MYND-type zinc-finger fold. Disordered regions lie at residues 171-219 (YETR…DSAN) and 262-281 (LPSK…SGLK). Polar residues-rich tracts occupy residues 207–219 (GNQN…DSAN) and 265–281 (KANS…SGLK). In terms of domain architecture, USP spans 329–633 (FGLVNLGNSC…GAYMLLYARD (305 aa)). C338 (nucleophile) is an active-site residue. The active-site Proton acceptor is H592. The tract at residues 637 to 702 (PVSKNGGRKS…TSSCSTKDSS (66 aa)) is disordered. Over residues 677–701 (DWSSGSLSSMFSSSDTTSSCSTKDS) the composition is skewed to low complexity.

Belongs to the peptidase C19 family.

The catalysed reaction is Thiol-dependent hydrolysis of ester, thioester, amide, peptide and isopeptide bonds formed by the C-terminal Gly of ubiquitin (a 76-residue protein attached to proteins as an intracellular targeting signal).. Recognizes and hydrolyzes the peptide bond at the C-terminal Gly of ubiquitin. Involved in the processing of poly-ubiquitin precursors as well as that of ubiquitinated proteins. The chain is Ubiquitin carboxyl-terminal hydrolase 17 (UBP17) from Arabidopsis thaliana (Mouse-ear cress).